The primary structure comprises 755 residues: DNA ligase 1 (755 aa).

Residues 1 to 44 constitute a mitochondrion transit peptide; sequence MRRLLTGCLLSSARPLKSRLPLLMSSSLPSSAGKKPKQATLARF. N-acetylserine is present on R2. A compositionally biased stretch (polar residues) spans 47–60; the sequence is SMKNKPTEGTPSPK. Disordered regions lie at residues 47–79 and 97–127; these read SMKNKPTEGTPSPKKSSKHMLEDRMDNVSGEEE and PSSMGSNFSSIPSSAPSSGVADSPQQSQRLV. A phosphoserine mark is found at S58 and S75. Positions 102 to 114 are enriched in low complexity; it reads SNFSSIPSSAPSS. 2 positions are modified to phosphoserine: S119 and S123. The tract at residues 309–318 is interaction with target DNA; that stretch reads KLRIGLAEKT. Residue E417 participates in ATP binding. K419 functions as the N6-AMP-lysine intermediate in the catalytic mechanism. ATP contacts are provided by R424 and R440. Residue E472 coordinates Mg(2+). An interaction with target DNA region spans residues 493–495; that stretch reads KRK. E571 provides a ligand contact to Mg(2+). The ATP site is built by K576, R590, and K596.

Belongs to the ATP-dependent DNA ligase family. Requires Mg(2+) as cofactor.

The protein localises to the mitochondrion. It is found in the nucleus. It catalyses the reaction ATP + (deoxyribonucleotide)n-3'-hydroxyl + 5'-phospho-(deoxyribonucleotide)m = (deoxyribonucleotide)n+m + AMP + diphosphate.. Its function is as follows. DNA ligase that seals nicks in double-stranded DNA during DNA replication, DNA recombination and DNA repair. The mitochondrial form is required for mitochondrial DNA maintenance but is non-essential while the nuclear form is essential for cell viability. In Saccharomyces cerevisiae (strain ATCC 204508 / S288c) (Baker's yeast), this protein is DNA ligase 1 (CDC9).